The following is a 2359-amino-acid chain: Neuron navigator 3 (2359 aa).

A Calponin-homology (CH) domain is found at 77–184; the sequence is IEDSKIYTDW…LFFSLSRYKQ (108 aa). Polar residues-rich tracts occupy residues 204 to 226, 233 to 243, 257 to 279, and 300 to 317; these read THTA…SSLT, SKHSGIATSQK, ASSS…FNSI, and QPSS…TSGQ. 2 disordered regions span residues 204 to 623 and 641 to 660; these read THTA…QQQH and ENEG…TKMD. Residues 318 to 329 show a composition bias toward low complexity; the sequence is PPASAIPSPSAS. Polar residues predominate over residues 335-352; that stretch reads KSMNVKHSATSTMLTVKQ. 2 stretches are compositionally biased toward low complexity: residues 353–363 and 427–439; these read PSPATSPTPSS and NSGL…TNSS. Over residues 465 to 491 the composition is skewed to basic and acidic residues; it reads PKEKEEKTRDKNKACAEKSGKEEKDQV. Residues 522 to 536 are compositionally biased toward low complexity; it reads IPSSSGIPKPGSKVP. Over residues 592 to 623 the composition is skewed to polar residues; the sequence is ASPSSSCVMQVTHSSGQSPGNGAVQLPQQQQH. Positions 680 to 708 form a coiled coil; sequence EARRMRTVKNIADLRQNLEETMSSLRGTQ. 4 disordered regions span residues 878-1315, 1413-1472, 1653-1758, and 1829-1855; these read ADSW…SPLF, LSES…AMSS, GALN…KPSQ, and ETGN…SRQS. Low complexity-rich tracts occupy residues 883 to 896 and 904 to 916; these read DSSS…DTLD and NTTS…SNIT. Residues 917-926 are compositionally biased toward polar residues; sequence VPSRKNTQLK. Residues 943 to 960 are compositionally biased toward basic and acidic residues; sequence EELKKAEGDCDSHGDGAA. 2 stretches are compositionally biased toward polar residues: residues 978-989 and 997-1013; these read QKASLSVSQTGS and QGGT…TSAL. Basic and acidic residues predominate over residues 1017-1029; sequence GKTDDAKASEKGK. 2 stretches are compositionally biased toward low complexity: residues 1077 to 1095 and 1160 to 1173; these read GAST…GSAT and SSTS…SSKS. The segment covering 1190-1199 has biased composition (polar residues); sequence GRSSPVTVNQ. 3 stretches are compositionally biased toward low complexity: residues 1209-1229, 1256-1266, and 1274-1285; these read VSDS…TSAS, GAKAGGKSASA, and SSSVVLSPSTSL. Residues 1299–1308 are compositionally biased toward gly residues; it reads GSMGSAGGLS. Positions 1439-1448 are enriched in basic and acidic residues; that stretch reads NQEEGKEWLR. The segment covering 1449-1461 has biased composition (polar residues); it reads SHSTGGLQDTGNQ. Residues serine 1462 and serine 1466 each carry the phosphoserine modification. The span at 1462-1472 shows a compositional bias: low complexity; it reads SPLVSPSAMSS. A coiled-coil region spans residues 1565-1656; that stretch reads AEEKAHSEQI…AQAAIQGALN (92 aa). Composition is skewed to low complexity over residues 1675–1692 and 1749–1758; these read SVSS…GSGN and SGSSSMKPSQ. Positions 1768-1835 form a coiled coil; sequence EAEAEIILQL…LKAETGNTAK (68 aa). A compositionally biased stretch (low complexity) spans 1841–1855; the sequence is SDSSSTASSSSSRQS.

Belongs to the Nav/unc-53 family. Present in neurons from central and peripheral nervous systems (at protein level). Highly expressed in brain cortex, midbrain, cerebellum and hippocampus.

Its subcellular location is the nucleus outer membrane. Plays a role in cell migration. May be involved in neuron regeneration. May regulate IL2 production by T-cells. The chain is Neuron navigator 3 (Nav3) from Mus musculus (Mouse).